Reading from the N-terminus, the 271-residue chain is Putative hydro-lyase Mrad2831_3350 (271 aa).

This sequence belongs to the D-glutamate cyclase family.

The polypeptide is Putative hydro-lyase Mrad2831_3350 (Methylobacterium radiotolerans (strain ATCC 27329 / DSM 1819 / JCM 2831 / NBRC 15690 / NCIMB 10815 / 0-1)).